Consider the following 241-residue polypeptide: tRNA pseudouridine synthase B (241 aa).

Residue aspartate 45 is the Nucleophile of the active site.

It belongs to the pseudouridine synthase TruB family. Type 1 subfamily.

The enzyme catalyses uridine(55) in tRNA = pseudouridine(55) in tRNA. Its function is as follows. Responsible for synthesis of pseudouridine from uracil-55 in the psi GC loop of transfer RNAs. The chain is tRNA pseudouridine synthase B from Chlamydia muridarum (strain MoPn / Nigg).